The sequence spans 301 residues: MPTLPNDLRLLEAESIAILRETAASFTKPVLLYSIGKDSGVLLHLARKAFHPSPVPFPLLHVDTGWKFREMIAFRDATVRRLGLTLIVHRNEEGHARGIDPIRSGSALHTRVMKTEALRQALDRHGFDAAIGGARRDEEKSRAKERVFSIRNAAHAWDPRDQRPELWRLWNPRIQPGESVRVFPLSNWTELDVWRYVAAQSIPVVPLYFAAERPVVHRSGALIMVDDGRLPLNPGETPEMRRVRFRTLGCYPLSGAIDSDAATVEDIIVEMRASRTSERQGRLIDGDEPASMERKKREGYF.

Residues 278-301 are disordered; that stretch reads ERQGRLIDGDEPASMERKKREGYF.

The protein belongs to the PAPS reductase family. CysD subfamily. As to quaternary structure, sulfate-activating enzymes, NodP and NodQ, may be physically associated.

The catalysed reaction is sulfate + ATP + H(+) = adenosine 5'-phosphosulfate + diphosphate. In terms of biological role, proposed to provide activated sulfate for transfer to nod factor. This chain is Sulfate adenylyltransferase subunit 2 (nodP), found in Azospirillum brasilense.